The chain runs to 239 residues: 7-cyano-7-deazaguanine synthase (239 aa).

8-18 (LSGGLDSPTVL) contributes to the ATP binding site. Zn(2+)-binding residues include Cys188, Cys196, Cys199, and Cys202.

This sequence belongs to the QueC family. The cofactor is Zn(2+).

The enzyme catalyses 7-carboxy-7-deazaguanine + NH4(+) + ATP = 7-cyano-7-deazaguanine + ADP + phosphate + H2O + H(+). Its pathway is purine metabolism; 7-cyano-7-deazaguanine biosynthesis. Its function is as follows. Catalyzes the ATP-dependent conversion of 7-carboxy-7-deazaguanine (CDG) to 7-cyano-7-deazaguanine (preQ(0)). This Picrophilus torridus (strain ATCC 700027 / DSM 9790 / JCM 10055 / NBRC 100828 / KAW 2/3) protein is 7-cyano-7-deazaguanine synthase.